The chain runs to 79 residues: Neurotoxin ShK-like1 (79 aa).

The first 25 residues, 1–25 (MSRKLLAVLMVCTFFLIAASMGTNA), serve as a signal peptide directing secretion. The propeptide occupies 26–35 (LPFHEGIERR). The 40-residue stretch at 39 to 78 (CVDKMPFVCMRKDIPAICKNRNHRSYAFIMDVCRKTCGQC) folds into the ShKT domain. Intrachain disulfides connect Cys-39–Cys-78, Cys-47–Cys-71, and Cys-56–Cys-75.

Expressed in nematocytes (in planulae and primary polyps). Is localized predominantly in the body column nematocytes and not in the tentacles (in primary polyps).

The protein localises to the nematocyst. The protein resides in the secreted. Neurotoxin. In vivo, induces contraction paralysis followed by death (within 2 hours) on zebrafish larvae. Also induces body contraction in Nematostella 11-dpf polyps. In Nematostella vectensis (Starlet sea anemone), this protein is Neurotoxin ShK-like1.